Reading from the N-terminus, the 289-residue chain is Light-independent protochlorophyllide reductase iron-sulfur ATP-binding protein (289 aa).

ATP-binding positions include 10-15 (GIGKST) and K39. S14 contacts Mg(2+). Residues C95 and C129 each coordinate [4Fe-4S] cluster. Position 180–181 (180–181 (NR)) interacts with ATP.

This sequence belongs to the NifH/BchL/ChlL family. As to quaternary structure, homodimer. Protochlorophyllide reductase is composed of three subunits; ChlL, ChlN and ChlB. Requires [4Fe-4S] cluster as cofactor.

It is found in the plastid. It localises to the chloroplast. The enzyme catalyses chlorophyllide a + oxidized 2[4Fe-4S]-[ferredoxin] + 2 ADP + 2 phosphate = protochlorophyllide a + reduced 2[4Fe-4S]-[ferredoxin] + 2 ATP + 2 H2O. Its pathway is porphyrin-containing compound metabolism; chlorophyll biosynthesis (light-independent). Functionally, component of the dark-operative protochlorophyllide reductase (DPOR) that uses Mg-ATP and reduced ferredoxin to reduce ring D of protochlorophyllide (Pchlide) to form chlorophyllide a (Chlide). This reaction is light-independent. The L component serves as a unique electron donor to the NB-component of the complex, and binds Mg-ATP. The sequence is that of Light-independent protochlorophyllide reductase iron-sulfur ATP-binding protein from Tetradesmus obliquus (Green alga).